The primary structure comprises 195 residues: HTH-type transcriptional regulator BetI (195 aa).

Residues 8–68 form the HTH tetR-type domain; the sequence is PIRRQQLIEA…ATMRYLISHL (61 aa). Residues 31–50 constitute a DNA-binding region (H-T-H motif); that stretch reads SIVQIARRAGVSNGIISHYF.

Its pathway is amine and polyamine biosynthesis; betaine biosynthesis via choline pathway [regulation]. Functionally, repressor involved in the biosynthesis of the osmoprotectant glycine betaine. It represses transcription of the choline transporter BetT and the genes of BetAB involved in the synthesis of glycine betaine. The polypeptide is HTH-type transcriptional regulator BetI (Pectobacterium atrosepticum (strain SCRI 1043 / ATCC BAA-672) (Erwinia carotovora subsp. atroseptica)).